We begin with the raw amino-acid sequence, 158 residues long: MGRFLLVTLSLLVVAFSLNGANSCCCPQDWLPRNGFCYKVFNHLKNWNDAEMYCRKFKPGCHLASLHSNADAVEFSEYITDYLTGQGHVWIGLRDTKKKYIWEWTDRSRTDFLPWRKDQPDHFNNEEFCVETVNFTGYLQWNDDSCTALRPFLCQCKY.

The signal sequence occupies residues 1 to 23 (MGRFLLVTLSLLVVAFSLNGANS). Intrachain disulfides connect Cys-26/Cys-37, Cys-54/Cys-154, and Cys-129/Cys-146. One can recognise a C-type lectin domain in the interval 33–155 (RNGFCYKVFN…CTALRPFLCQ (123 aa)). 3 residues coordinate Ca(2+): Gln-119, Asp-121, and Glu-127. The Galactose-binding motif lies at 119–121 (QPD). An N-linked (GlcNAc...) asparagine glycan is attached at Asn-134. The Ca(2+) site is built by Asn-142 and Asp-143.

It belongs to the true venom lectin family. As to quaternary structure, homodimer; disulfide-linked. Expressed by the venom gland.

The protein resides in the secreted. In terms of biological role, galactose-binding lectin that binds to and agglutinates erythrocytes in a calcium-dependent manner. The protein is C-type lectin galactose-binding isoform of Pseudechis porphyriacus (Red-bellied black snake).